Consider the following 111-residue polypeptide: uncharacterized protein (111 aa).

This is an uncharacterized protein from Acanthamoeba polyphaga mimivirus (APMV).